Here is a 402-residue protein sequence, read N- to C-terminus: S-adenosylmethionine synthase (402 aa).

ATP is bound at residue 137–142 (GQGSAD).

It belongs to the AdoMet synthase 2 family. Requires Mg(2+) as cofactor.

It catalyses the reaction L-methionine + ATP + H2O = S-adenosyl-L-methionine + phosphate + diphosphate. Its pathway is amino-acid biosynthesis; S-adenosyl-L-methionine biosynthesis; S-adenosyl-L-methionine from L-methionine: step 1/1. Functionally, catalyzes the formation of S-adenosylmethionine from methionine and ATP. The polypeptide is S-adenosylmethionine synthase (Pyrobaculum calidifontis (strain DSM 21063 / JCM 11548 / VA1)).